Reading from the N-terminus, the 1343-residue chain is uncharacterized protein (1343 aa).

Residues 432-449 traverse the membrane as a helical segment; sequence LYVYFVTTKTGVVAFSLL.

Belongs to the IIV-6 295L family.

The protein resides in the membrane. This is an uncharacterized protein from Acheta domesticus (House cricket).